A 283-amino-acid polypeptide reads, in one-letter code: Polyamine aminopropyltransferase (283 aa).

One can recognise a PABS domain in the interval 2 to 238 (ELWYTEEWTE…GHWLFGFASK (237 aa)). Residue glutamine 31 coordinates S-methyl-5'-thioadenosine. Positions 62 and 86 each coordinate spermidine. S-methyl-5'-thioadenosine-binding positions include glutamate 106 and 137-138 (DG). Residue aspartate 156 is the Proton acceptor of the active site. Residue 156-159 (DSTD) participates in spermidine binding. Proline 163 contributes to the S-methyl-5'-thioadenosine binding site.

It belongs to the spermidine/spermine synthase family. Homodimer or homotetramer.

The protein localises to the cytoplasm. The catalysed reaction is S-adenosyl 3-(methylsulfanyl)propylamine + putrescine = S-methyl-5'-thioadenosine + spermidine + H(+). The protein operates within amine and polyamine biosynthesis; spermidine biosynthesis; spermidine from putrescine: step 1/1. Catalyzes the irreversible transfer of a propylamine group from the amino donor S-adenosylmethioninamine (decarboxy-AdoMet) to putrescine (1,4-diaminobutane) to yield spermidine. This Clostridioides difficile (strain 630) (Peptoclostridium difficile) protein is Polyamine aminopropyltransferase.